Reading from the N-terminus, the 1012-residue chain is RAS protein activator like-3 (1012 aa).

Disordered regions lie at residues 1-128 (MDPP…TPDV), 147-196 (GNED…QIHN), and 208-229 (KKAKSELGASASRDGPPSALGS). Polar residues predominate over residues 7–21 (SRASQTQPVAPSPLT). A Phosphoserine modification is found at Ser18. Residues 27–39 (SGGGAEKGAGGFR) are compositionally biased toward gly residues. The span at 50 to 62 (QSHQETTASSQPA) shows a compositional bias: polar residues. Ser51 is modified (phosphoserine). Positions 100–113 (SEPEPENPEPEPEL) are enriched in acidic residues. Phosphoserine is present on residues Ser160, Ser162, Ser163, and Ser166. Low complexity predominate over residues 160 to 171 (SASSESSIHVAS). Residues 175–186 (KDPDRTPGKTDP) show a composition bias toward basic and acidic residues. Residues 193–294 (QIHNVRGLLK…WIEDLRRHFQ (102 aa)) form the PH domain. Residues Ser212, Ser225, Ser229, and Ser232 each carry the phosphoserine modification. Thr235 carries the phosphothreonine modification. A C2 domain is found at 285–405 (WIEDLRRHFQ…APAAGLERWF (121 aa)). The Ras-GAP domain occupies 475-683 (GRAQALVTDL…PAMQHFLDQV (209 aa)). Residues 752–887 (PAPRTQGHSS…DKDQALGTHR (136 aa)) are disordered. 2 positions are modified to phosphoserine: Ser788 and Ser791. Residues 826-841 (PARRRPSAGPRPRPKG) are compositionally biased toward basic residues. Residues 889-989 (VGKLAELQCE…KDTIQNLQLL (101 aa)) adopt a coiled-coil conformation. The segment covering 990-999 (PRTSESQSQP) has biased composition (polar residues). The tract at residues 990–1012 (PRTSESQSQPVPLKAPCINGDTT) is disordered.

It localises to the cytoplasm. The protein resides in the cell cortex. Functions as a Ras GTPase-activating protein. Plays an important role in the expansion and functions of natural killer T (NKT) cells in the liver by negatively regulating RAS activity and the down-stream ERK signaling pathway. The polypeptide is RAS protein activator like-3 (RASAL3) (Bos taurus (Bovine)).